An 88-amino-acid polypeptide reads, in one-letter code: Small ribosomal subunit protein bS20 (88 aa).

Residues 1-10 (MANHKSSLKR) show a composition bias toward basic residues. Residues 1–24 (MANHKSSLKRAKQDIVRNTRNKSR) are disordered.

Belongs to the bacterial ribosomal protein bS20 family.

Functionally, binds directly to 16S ribosomal RNA. This Desulfosudis oleivorans (strain DSM 6200 / JCM 39069 / Hxd3) (Desulfococcus oleovorans) protein is Small ribosomal subunit protein bS20.